The primary structure comprises 881 residues: Leucine--tRNA ligase (881 aa).

Residues 48 to 58 carry the 'HIGH' region motif; the sequence is PYPSGKLHMGH. Positions 638 to 642 match the 'KMSKS' region motif; it reads KMSKS. ATP is bound at residue Lys-641.

It belongs to the class-I aminoacyl-tRNA synthetase family.

The protein localises to the cytoplasm. The enzyme catalyses tRNA(Leu) + L-leucine + ATP = L-leucyl-tRNA(Leu) + AMP + diphosphate. The polypeptide is Leucine--tRNA ligase (Herminiimonas arsenicoxydans).